The sequence spans 188 residues: Ribosome-recycling factor (188 aa).

This sequence belongs to the RRF family.

The protein resides in the cytoplasm. Functionally, responsible for the release of ribosomes from messenger RNA at the termination of protein biosynthesis. May increase the efficiency of translation by recycling ribosomes from one round of translation to another. This is Ribosome-recycling factor from Anaeromyxobacter dehalogenans (strain 2CP-C).